Consider the following 333-residue polypeptide: 2-oxoglutarate-dependent dioxygenase ucsF (333 aa).

Residues 174–296 form the Fe2OG dioxygenase domain; sequence NASELRLNHY…RYSIAYLCKA (123 aa). Positions 202, 204, and 264 each coordinate Fe cation. Arginine 287 lines the 2-oxoglutarate pocket.

This sequence belongs to the iron/ascorbate-dependent oxidoreductase family. It depends on Fe(2+) as a cofactor.

The protein operates within mycotoxin biosynthesis. In terms of biological role, 2-oxoglutarate-dependent dioxygenase; part of the gene cluster that mediates the biosynthesis of UCS1025A, a member of the pyrrolizidinone family that acts as a strong telomerase inhibitor and displays potent antibacterial and antitumor properties. These compounds share a hemiaminal-containing pyrrolizidinone core fused with a gamma-lactone, giving a furopyrrolizidine that is connected to a decalin fragment. The polyketide synthase module (PKS) of the PKS-NRPS ucsA is responsible for the synthesis of the polyketide backbone via the condensation of an acetyl-CoA starter unit with 6 malonyl-CoA units. The downstream nonribosomal peptide synthetase (NRPS) module then amidates the carboxyl end of the polyketide with a 2S,3S-methylproline derived from L-isoleucine by the 2-oxoglutarate-dependent dioxygenase ucsF which converts L-isoleucine to (4S,5S)-4-methylpyrroline-5-carboxylate that is further converted to 2S,3S-methylproline by the pyrroline-5-carboxylate reductase ucsG. Reductive release of the completed aminoacyl polyketide from the assembly line can form the 3-pyrrolin-2-one structure via an intramolecular Knoevenagel reaction. Because ucsA lacks a designated enoylreductase (ER) domain, the required activity is provided the enoyl reductase ucsL. This keto acyclic precursor is the substrate of the Diels-Alderase ucsH, that catalyzes the Diels-Alder cycloaddition. Oxidation of the 3S-methyl group to a carboxylate by the cytochrome P450 monooxygenase ucsK allows an oxa-Michael cyclization that might involve the reductase/dehydrogenase ucsI and which furnishes the furopyrrolizidine. The oxidase ucsJ likely plays a critical role in stereoselective reduction of the C5-C6 double bond to afford the required R-configured carboxylate group. Further enolization and oxidation at C5 by an unidentified enzyme affords the last intermediate that can undergo oxa-Michael cyclization to yield UCS1025A. The polypeptide is 2-oxoglutarate-dependent dioxygenase ucsF (Acremonium sp).